The primary structure comprises 700 residues: Leucine zipper putative tumor suppressor 3 (700 aa).

4 disordered regions span residues 1-20, 40-121, 133-188, and 202-344; these read MAPA…PAPH, RADP…SEDK, LRGS…SEPL, and FHSM…PPSP. Residues 109-121 show a composition bias toward basic and acidic residues; that stretch reads NRERPGRYPSEDK. The span at 203 to 216 shows a compositional bias: polar residues; that stretch reads HSMQNLCPPQTNGT. Composition is skewed to low complexity over residues 248–265 and 301–321; these read DSGR…SSYS and GTSD…MGRS. A compositionally biased stretch (gly residues) spans 322-333; the sequence is GHLGSGEGGNGG. Phosphoserine is present on residues Ser-343 and Ser-345. 2 coiled-coil regions span residues 345-523 and 597-666; these read SALI…SLRD and TRAL…RLRE. Positions 662-700 are disordered; that stretch reads RRLRERGAAGGSSTPTPQHGEEKKAWTPSRLERIESTEI. Residues 680 to 700 show a composition bias toward basic and acidic residues; sequence HGEEKKAWTPSRLERIESTEI.

This sequence belongs to the LZTS3 family. As to quaternary structure, interacts (via C-terminus) with SHANK3 (via PDZ domain). Interacts (via coiled coil) with SIPA1L1. Can form homooligomers.

The protein localises to the synapse. It is found in the postsynaptic density. The protein resides in the cell projection. It localises to the dendritic spine. Its subcellular location is the dendrite. The protein localises to the cytoplasm. It is found in the cytoskeleton. May be involved in promoting the maturation of dendritic spines, probably via regulating SIPA1L1 levels at the postsynaptic density of synapses. This is Leucine zipper putative tumor suppressor 3 from Mus musculus (Mouse).